The chain runs to 279 residues: Tryptophan synthase alpha chain (279 aa).

Residues Glu-50 and Asp-61 each act as proton acceptor in the active site.

It belongs to the TrpA family. As to quaternary structure, tetramer of two alpha and two beta chains.

The enzyme catalyses (1S,2R)-1-C-(indol-3-yl)glycerol 3-phosphate + L-serine = D-glyceraldehyde 3-phosphate + L-tryptophan + H2O. The protein operates within amino-acid biosynthesis; L-tryptophan biosynthesis; L-tryptophan from chorismate: step 5/5. In terms of biological role, the alpha subunit is responsible for the aldol cleavage of indoleglycerol phosphate to indole and glyceraldehyde 3-phosphate. The chain is Tryptophan synthase alpha chain from Rhizobium meliloti (strain 1021) (Ensifer meliloti).